Here is a 391-residue protein sequence, read N- to C-terminus: Multidrug resistance protein MdtL (391 aa).

Over 1-3 the chain is Cytoplasmic; sequence MSR. A helical membrane pass occupies residues 4–24; it reads FLICSFALVLLYPAGIDMYLV. Topologically, residues 25-41 are periplasmic; it reads GLPRIAADLNASEAQLH. The chain crosses the membrane as a helical span at residues 42-62; that stretch reads IAFSVYLAGMAAAMLFAGKVA. Over 63-68 the chain is Cytoplasmic; that stretch reads DRSGRK. The chain crosses the membrane as a helical span at residues 69-89; sequence PVAIPGAALFIIASVFCSLAE. Residues 90-92 lie on the Periplasmic side of the membrane; it reads TST. A helical membrane pass occupies residues 93–113; that stretch reads LFLAGRFLQGLGAGCCYVVAF. Over 114–130 the chain is Cytoplasmic; it reads AILRDTLDDRRRAKVLS. A helical membrane pass occupies residues 131-151; the sequence is LLNGITCIIPVLAPVLGHLIM. The Periplasmic portion of the chain corresponds to 152–157; that stretch reads LKFPWQ. Residues 158–178 form a helical membrane-spanning segment; the sequence is SLFWTMAIMGIAVLMLSLFIL. Over 179 to 198 the chain is Cytoplasmic; the sequence is KETRPAAPAASDKSRENSES. Residues 199 to 221 form a helical membrane-spanning segment; the sequence is LLNRFFLSRVVITTLSVSVILTF. Over 222–244 the chain is Periplasmic; the sequence is VNTSPVLLMEIMGFERGEYATIM. A helical membrane pass occupies residues 245–265; the sequence is ALTAGVSMTVSFSTPFALGIF. Topologically, residues 266–268 are cytoplasmic; that stretch reads KPR. A helical transmembrane segment spans residues 269-289; it reads TLMITSQVLFLAAGITLAVSP. Residues 290–292 lie on the Periplasmic side of the membrane; that stretch reads SHA. Residues 293-313 form a helical membrane-spanning segment; sequence ISLFGITLICAGFSVGFGVAM. The Cytoplasmic segment spans residues 314–330; the sequence is SQALGPFSLRAGVASST. A helical transmembrane segment spans residues 331–351; sequence LGIAQVCGSSLWIWLAAVVGI. Residues 352 to 355 are Periplasmic-facing; it reads GAWN. The helical transmembrane segment at 356–376 threads the bilayer; that stretch reads MLIGILIACSIVSLLLIMFVA. Residues 377–391 are Cytoplasmic-facing; that stretch reads PGRPVAAHEEIHHHA.

This sequence belongs to the major facilitator superfamily. DHA1 family. MdtL (TC 2.A.1.2.22) subfamily.

Its subcellular location is the cell inner membrane. The polypeptide is Multidrug resistance protein MdtL (Shigella dysenteriae serotype 1 (strain Sd197)).